Reading from the N-terminus, the 104-residue chain is MIRKAFLMSVKPEAHAEYKRRHDEIWPELADTLKKHGAHNYNIFLNPETSQLFAYVEIESEERWNAVADTEICKEWWAYMKDIMPSNPDNSPVSLELTSVFYLA.

Substrate is bound at residue Y18. H22 (proton donor) is an active-site residue. Residues Y41 and W76–W77 each bind substrate.

This sequence belongs to the rhamnose mutarotase family. Homodimer.

Its subcellular location is the cytoplasm. The enzyme catalyses alpha-L-rhamnose = beta-L-rhamnose. It participates in carbohydrate metabolism; L-rhamnose metabolism. In terms of biological role, involved in the anomeric conversion of L-rhamnose. This chain is L-rhamnose mutarotase, found in Tolumonas auensis (strain DSM 9187 / NBRC 110442 / TA 4).